The following is a 237-amino-acid chain: Ribose-5-phosphate isomerase A (237 aa).

Substrate contacts are provided by residues 33–36 (TGST), 88–91 (DGAD), and 101–104 (KGRG). E110 (proton acceptor) is an active-site residue. Position 128 (K128) interacts with substrate.

The protein belongs to the ribose 5-phosphate isomerase family. In terms of assembly, homodimer.

It catalyses the reaction aldehydo-D-ribose 5-phosphate = D-ribulose 5-phosphate. It functions in the pathway carbohydrate degradation; pentose phosphate pathway; D-ribose 5-phosphate from D-ribulose 5-phosphate (non-oxidative stage): step 1/1. Functionally, catalyzes the reversible conversion of ribose-5-phosphate to ribulose 5-phosphate. The sequence is that of Ribose-5-phosphate isomerase A from Methanoregula boonei (strain DSM 21154 / JCM 14090 / 6A8).